A 132-amino-acid chain; its full sequence is Small ribosomal subunit protein uS9 (132 aa).

Residues 103–132 (NGLLTRDDRTKERKKPGLKRARKAPQYTKR) are disordered. Residues 114 to 132 (ERKKPGLKRARKAPQYTKR) are compositionally biased toward basic residues.

The protein belongs to the universal ribosomal protein uS9 family.

The protein is Small ribosomal subunit protein uS9 of Dehalococcoides mccartyi (strain CBDB1).